The primary structure comprises 541 residues: CTP synthase (541 aa).

Residues 1–268 (MAKFIFITGG…AEIVCRRLGL (268 aa)) form an amidoligase domain region. Ser-13 contacts CTP. A UTP-binding site is contributed by Ser-13. ATP contacts are provided by residues 14–19 (GLGKGI) and Asp-71. 2 residues coordinate Mg(2+): Asp-71 and Glu-141. CTP contacts are provided by residues 148–150 (DIE), 189–194 (KTKPTQ), and Lys-225. Residues 189 to 194 (KTKPTQ) and Lys-225 contribute to the UTP site. Residues 293–539 (EIALVGKYVA…IKAALEYRAG (247 aa)) form the Glutamine amidotransferase type-1 domain. Gly-359 contributes to the L-glutamine binding site. The Nucleophile; for glutamine hydrolysis role is filled by Cys-386. L-glutamine-binding positions include 387 to 390 (MGMQ), Glu-410, and Arg-467. Catalysis depends on residues His-512 and Glu-514.

It belongs to the CTP synthase family. As to quaternary structure, homotetramer.

It catalyses the reaction UTP + L-glutamine + ATP + H2O = CTP + L-glutamate + ADP + phosphate + 2 H(+). The catalysed reaction is L-glutamine + H2O = L-glutamate + NH4(+). The enzyme catalyses UTP + NH4(+) + ATP = CTP + ADP + phosphate + 2 H(+). Its pathway is pyrimidine metabolism; CTP biosynthesis via de novo pathway; CTP from UDP: step 2/2. Its activity is regulated as follows. Allosterically activated by GTP, when glutamine is the substrate; GTP has no effect on the reaction when ammonia is the substrate. The allosteric effector GTP functions by stabilizing the protein conformation that binds the tetrahedral intermediate(s) formed during glutamine hydrolysis. Inhibited by the product CTP, via allosteric rather than competitive inhibition. Its function is as follows. Catalyzes the ATP-dependent amination of UTP to CTP with either L-glutamine or ammonia as the source of nitrogen. Regulates intracellular CTP levels through interactions with the four ribonucleotide triphosphates. This is CTP synthase from Symbiobacterium thermophilum (strain DSM 24528 / JCM 14929 / IAM 14863 / T).